A 189-amino-acid chain; its full sequence is UPF0301 protein PP_4995 (189 aa).

It belongs to the UPF0301 (AlgH) family.

This chain is UPF0301 protein PP_4995, found in Pseudomonas putida (strain ATCC 47054 / DSM 6125 / CFBP 8728 / NCIMB 11950 / KT2440).